Here is a 159-residue protein sequence, read N- to C-terminus: Nucleotide-binding protein Psyr_4087 (159 aa).

It belongs to the YajQ family.

Functionally, nucleotide-binding protein. This chain is Nucleotide-binding protein Psyr_4087, found in Pseudomonas syringae pv. syringae (strain B728a).